We begin with the raw amino-acid sequence, 253 residues long: MRKPIIAGNWKMNKTLGEAVSFVEEVKSSIPAADKAEAVVCAPALFLEKLASAVKGTDLKVGAQNMHFEESGAFTGEISPVALKDLGVDYCVIGHSERREMFAETDETVNKKAHAAFKHGIVPIICVGETLEEREAGKTNDLVADQVKKGLAGLSEEQVAASVIAYEPIWAIGTGKSSTAKDANDVCAHIRKTVAESFSQEAADKLRIQYGGSVKPANIKEYMAESDIDGALVGGASLEPQSFVQLLEEGQYE.

A substrate-binding site is contributed by 9–11 (NWK). Histidine 95 functions as the Electrophile in the catalytic mechanism. The Proton acceptor role is filled by glutamate 167. Substrate-binding positions include glycine 173, serine 213, and 234 to 235 (GG). Serine 213 carries the phosphoserine modification.

The protein belongs to the triosephosphate isomerase family. Homodimer.

The protein resides in the cytoplasm. It catalyses the reaction D-glyceraldehyde 3-phosphate = dihydroxyacetone phosphate. Its pathway is carbohydrate biosynthesis; gluconeogenesis. It participates in carbohydrate degradation; glycolysis; D-glyceraldehyde 3-phosphate from glycerone phosphate: step 1/1. Its function is as follows. Involved in the gluconeogenesis. Catalyzes stereospecifically the conversion of dihydroxyacetone phosphate (DHAP) to D-glyceraldehyde-3-phosphate (G3P). The protein is Triosephosphate isomerase of Bacillus subtilis (strain 168).